The primary structure comprises 194 residues: Inner membrane-spanning protein YciB (194 aa).

A run of 5 helical transmembrane segments spans residues 1-21 (MKLL…KTTN), 49-69 (EKMH…TILF), 77-97 (WKPS…GWVS), 120-140 (LNYS…YVAY), and 150-170 (FKLF…GVYI).

This sequence belongs to the YciB family.

It is found in the cell inner membrane. Plays a role in cell envelope biogenesis, maintenance of cell envelope integrity and membrane homeostasis. The chain is Inner membrane-spanning protein YciB from Hahella chejuensis (strain KCTC 2396).